The chain runs to 88 residues: MRLLLSLPVLLVALSVVLERPAPAQAAPDFSSTLEGLPDKLKEFGNTLEDKAKKAIERIKQSDLPAKTRNWFTETFGKVRDTFKATFS.

The N-terminal stretch at 1-26 is a signal peptide; sequence MRLLLSLPVLLVALSVVLERPAPAQA.

Belongs to the apolipoprotein C1 family.

The protein resides in the secreted. Its function is as follows. Inhibitor of lipoprotein binding to the low density lipoprotein (LDL) receptor, LDL receptor-related protein, and very low density lipoprotein (VLDL) receptor. Associates with high density lipoproteins (HDL) and the triacylglycerol-rich lipoproteins in the plasma and makes up about 10% of the protein of the VLDL and 2% of that of HDL. Appears to interfere directly with fatty acid uptake and is also the major plasma inhibitor of cholesteryl ester transfer protein (CETP). Binds free fatty acids and reduces their intracellular esterification. Modulates the interaction of APOE with beta-migrating VLDL and inhibits binding of beta-VLDL to the LDL receptor-related protein. The polypeptide is Apolipoprotein C-I (APOC1) (Tupaia glis (Common tree shrew)).